The sequence spans 178 residues: Putative pre-16S rRNA nuclease (178 aa).

The segment covering 1 to 18 has biased composition (basic and acidic residues); sequence MDHAEQGPDRPGVDDPGR. The interval 1–21 is disordered; that stretch reads MDHAEQGPDRPGVDDPGRGRR.

This sequence belongs to the YqgF nuclease family.

Its subcellular location is the cytoplasm. Its function is as follows. Could be a nuclease involved in processing of the 5'-end of pre-16S rRNA. This Rhodococcus jostii (strain RHA1) protein is Putative pre-16S rRNA nuclease.